The following is a 176-amino-acid chain: Probable non-specific lipid-transfer protein 1 (176 aa).

The N-terminal stretch at 1-37 is a signal peptide; the sequence is MRTVSAPSAVALVVIVAAGLAWTSLASVAPPAPAPGS. 4 disulfides stabilise this stretch: Cys-41/Cys-89, Cys-51/Cys-66, Cys-67/Cys-112, and Cys-87/Cys-128. The segment at 139-176 is disordered; sequence QLPVSLRHGPVTGPSDPAHKARLERPQIRVPPPAPEKA. The segment covering 155-165 has biased composition (basic and acidic residues); it reads PAHKARLERPQ. The span at 167 to 176 shows a compositional bias: pro residues; the sequence is RVPPPAPEKA.

This sequence belongs to the plant LTP family.

In terms of biological role, plant non-specific lipid-transfer proteins transfer phospholipids as well as galactolipids across membranes. May play a role in wax or cutin deposition in the cell walls of expanding epidermal cells and certain secretory tissues. This is Probable non-specific lipid-transfer protein 1 from Parietaria judaica (Pellitory-of-the-wall).